The sequence spans 487 residues: Transcriptional adapter ADA2b (487 aa).

Polar residues predominate over residues 1 to 13; that stretch reads MGRSRGNFQNFED. The tract at residues 1–25 is disordered; sequence MGRSRGNFQNFEDPTQRTRKKKNAA. The ZZ-type zinc-finger motif lies at 42–98; sequence GGKYNCDYCQKDITGKIRIKCAVCPDFDLCIECMSVGAEITPHKCDHPYRVMGNLTF. The Zn(2+) site is built by Cys47, Cys50, Cys62, Cys65, Cys71, Cys74, His84, and His88. Residues 100-152 enclose the SANT domain; sequence LICPDWSADDEMLLLEGLEIYGLGNWAEVAEHVGTKSKEQCLEHYRNIYLNSP. The residue at position 216 (Lys216) is an N6-acetyllysine; by GCN5. The span at 368–383 shows a compositional bias: basic and acidic residues; sequence RKRKRENEEGMNRGKE. The disordered stretch occupies residues 368–388; that stretch reads RKRKRENEEGMNRGKESGQFG. Residues 401–487 form the SWIRM domain; that stretch reads QASSSYVNDL…MLVKKGIAQL (87 aa).

In terms of assembly, interacts in vitro with the HAT domain of GCN5 and with the DNA-binding domain of the transcriptional activator DREB1B/CBF1. Interacts with BZIP11. Post-translationally, acetylated in vitro by GCN5, but acetylation is not essential for biological activity. Expressed in roots, leaves, stems, flowers and siliques, with the strongest activity in the meristematic zones.

It is found in the nucleus. In terms of biological role, required for the function of some acidic activation domains, which activate transcription from a distant site. The exact mechanism of action is not yet known. ADA2 stimulates the acetyltransferase activity of GCN5 on free histones or nucleosomes, probably by opening up the promoter region. Mediates auxin and cytokinin signals in the control of cell proliferation and might be involved in repression of a freezing tolerance pathway at warm temperature. Involved in the positive regulation of salt-induced gene expression by maintaining locus-specific acetylation of histones H4 and H3. The polypeptide is Transcriptional adapter ADA2b (ADA2B) (Arabidopsis thaliana (Mouse-ear cress)).